The chain runs to 431 residues: Enolase (431 aa).

Glutamine 168 is a binding site for (2R)-2-phosphoglycerate. Glutamate 210 serves as the catalytic Proton donor. Mg(2+) contacts are provided by aspartate 247, glutamate 291, and aspartate 318. Positions 343, 372, 373, and 394 each coordinate (2R)-2-phosphoglycerate. Residue lysine 343 is the Proton acceptor of the active site.

The protein belongs to the enolase family. Component of the RNA degradosome, a multiprotein complex involved in RNA processing and mRNA degradation. Mg(2+) is required as a cofactor.

Its subcellular location is the cytoplasm. It is found in the secreted. The protein localises to the cell surface. It catalyses the reaction (2R)-2-phosphoglycerate = phosphoenolpyruvate + H2O. Its pathway is carbohydrate degradation; glycolysis; pyruvate from D-glyceraldehyde 3-phosphate: step 4/5. Catalyzes the reversible conversion of 2-phosphoglycerate (2-PG) into phosphoenolpyruvate (PEP). It is essential for the degradation of carbohydrates via glycolysis. The protein is Enolase of Acinetobacter baylyi (strain ATCC 33305 / BD413 / ADP1).